The chain runs to 141 residues: uncharacterized protein (141 aa).

Residues 10-117 (IFCDIVQGSI…VPKYETGKGF (108 aa)) enclose the HIT domain. Positions 102-106 (HFHLH) match the Histidine triad motif motif.

This is an uncharacterized protein from Mycoplasma genitalium (strain ATCC 33530 / DSM 19775 / NCTC 10195 / G37) (Mycoplasmoides genitalium).